A 619-amino-acid polypeptide reads, in one-letter code: 1-deoxy-D-xylulose-5-phosphate synthase (619 aa).

Thiamine diphosphate contacts are provided by residues histidine 74 and 115 to 117 (GHS). Aspartate 146 is a Mg(2+) binding site. Thiamine diphosphate contacts are provided by residues 147 to 148 (GA), asparagine 175, tyrosine 285, and glutamate 365. Asparagine 175 is a Mg(2+) binding site.

This sequence belongs to the transketolase family. DXPS subfamily. As to quaternary structure, homodimer. Mg(2+) is required as a cofactor. Requires thiamine diphosphate as cofactor.

The enzyme catalyses D-glyceraldehyde 3-phosphate + pyruvate + H(+) = 1-deoxy-D-xylulose 5-phosphate + CO2. It functions in the pathway metabolic intermediate biosynthesis; 1-deoxy-D-xylulose 5-phosphate biosynthesis; 1-deoxy-D-xylulose 5-phosphate from D-glyceraldehyde 3-phosphate and pyruvate: step 1/1. In terms of biological role, catalyzes the acyloin condensation reaction between C atoms 2 and 3 of pyruvate and glyceraldehyde 3-phosphate to yield 1-deoxy-D-xylulose-5-phosphate (DXP). The polypeptide is 1-deoxy-D-xylulose-5-phosphate synthase (Clostridium perfringens (strain ATCC 13124 / DSM 756 / JCM 1290 / NCIMB 6125 / NCTC 8237 / Type A)).